The sequence spans 396 residues: Elongation factor Tu (396 aa).

A tr-type G domain is found at K10–E205. A G1 region spans residues G19 to T26. Residue G19–T26 coordinates GTP. T26 is a binding site for Mg(2+). Residues G61 to A65 form a G2 region. The G3 stretch occupies residues D82–G85. Residues D82–H86 and N137–D140 each bind GTP. Positions N137–D140 are G4. The tract at residues S175–L177 is G5.

The protein belongs to the TRAFAC class translation factor GTPase superfamily. Classic translation factor GTPase family. EF-Tu/EF-1A subfamily. As to quaternary structure, monomer.

The protein localises to the cytoplasm. It carries out the reaction GTP + H2O = GDP + phosphate + H(+). Its function is as follows. GTP hydrolase that promotes the GTP-dependent binding of aminoacyl-tRNA to the A-site of ribosomes during protein biosynthesis. This Salinibacter ruber (strain DSM 13855 / M31) protein is Elongation factor Tu.